We begin with the raw amino-acid sequence, 304 residues long: Acetyl-coenzyme A carboxylase carboxyl transferase subunit beta (304 aa).

One can recognise a CoA carboxyltransferase N-terminal domain in the interval 23–292 (VWTKCDSCGQ…PNPEAPREGV (270 aa)). Positions 27, 30, 46, and 49 each coordinate Zn(2+). Residues 27 to 49 (CDSCGQVLYRAELERNLEVCPKC) form a C4-type zinc finger. Positions 284–304 (NPEAPREGVVVPPVPDQEPEA) are disordered. Pro residues predominate over residues 295–304 (PPVPDQEPEA).

It belongs to the AccD/PCCB family. Acetyl-CoA carboxylase is a heterohexamer composed of biotin carboxyl carrier protein (AccB), biotin carboxylase (AccC) and two subunits each of ACCase subunit alpha (AccA) and ACCase subunit beta (AccD). The cofactor is Zn(2+).

It localises to the cytoplasm. It catalyses the reaction N(6)-carboxybiotinyl-L-lysyl-[protein] + acetyl-CoA = N(6)-biotinyl-L-lysyl-[protein] + malonyl-CoA. It functions in the pathway lipid metabolism; malonyl-CoA biosynthesis; malonyl-CoA from acetyl-CoA: step 1/1. In terms of biological role, component of the acetyl coenzyme A carboxylase (ACC) complex. Biotin carboxylase (BC) catalyzes the carboxylation of biotin on its carrier protein (BCCP) and then the CO(2) group is transferred by the transcarboxylase to acetyl-CoA to form malonyl-CoA. The protein is Acetyl-coenzyme A carboxylase carboxyl transferase subunit beta of Escherichia coli O139:H28 (strain E24377A / ETEC).